The chain runs to 1058 residues: Protein translocase subunit SECA2, chloroplastic (1058 aa).

The transit peptide at 1–58 directs the protein to the chloroplast; the sequence is MGSVSNLVSPNICHPAPPCLTSRSNKFPWTKPISGLLFYRSVTPIKRCHLVRRSCVVS. 167 to 174 provides a ligand contact to ATP; that stretch reads MKTGEGKT.

This sequence belongs to the SecA family. Part of a second Sec protein translocation apparatus. Interacts probably with SCY2.

It localises to the plastid. The protein resides in the chloroplast membrane. It catalyses the reaction ATP + H2O + chloroplast-proteinSide 1 = ADP + phosphate + chloroplast-proteinSide 2.. Involved in protein export. Probably interacts with other proteins to allow the postimport or conservative sorting pathway for inner membrane proteins in plastids. May have a central role in coupling the hydrolysis of ATP to the transfer of proteins across the membrane. This is Protein translocase subunit SECA2, chloroplastic from Arabidopsis thaliana (Mouse-ear cress).